Consider the following 132-residue polypeptide: UPF0299 membrane protein YohJ (132 aa).

4 helical membrane-spanning segments follow: residues 7–27 (IIWQ…AGIF), 31–51 (LLPV…VLLA), 63–83 (GCYV…VGVM), and 93–113 (FGPV…VMSW).

Belongs to the UPF0299 family.

The protein resides in the cell inner membrane. This Shigella dysenteriae serotype 1 (strain Sd197) protein is UPF0299 membrane protein YohJ.